The sequence spans 227 residues: Ribosomal RNA small subunit methyltransferase G (227 aa).

Residues G74, L79, A124–E125, and R142 each bind S-adenosyl-L-methionine.

Belongs to the methyltransferase superfamily. RNA methyltransferase RsmG family.

It localises to the cytoplasm. In terms of biological role, specifically methylates the N7 position of guanine in position 518 of 16S rRNA. The sequence is that of Ribosomal RNA small subunit methyltransferase G from Mycolicibacterium vanbaalenii (strain DSM 7251 / JCM 13017 / BCRC 16820 / KCTC 9966 / NRRL B-24157 / PYR-1) (Mycobacterium vanbaalenii).